The chain runs to 202 residues: ATP-dependent Clp protease proteolytic subunit (202 aa).

S101 (nucleophile) is an active-site residue. H126 is an active-site residue.

The protein belongs to the peptidase S14 family. As to quaternary structure, component of the chloroplastic Clp protease core complex.

It localises to the plastid. The protein localises to the chloroplast stroma. The catalysed reaction is Hydrolysis of proteins to small peptides in the presence of ATP and magnesium. alpha-casein is the usual test substrate. In the absence of ATP, only oligopeptides shorter than five residues are hydrolyzed (such as succinyl-Leu-Tyr-|-NHMec, and Leu-Tyr-Leu-|-Tyr-Trp, in which cleavage of the -Tyr-|-Leu- and -Tyr-|-Trp bonds also occurs).. In terms of biological role, cleaves peptides in various proteins in a process that requires ATP hydrolysis. Has a chymotrypsin-like activity. Plays a major role in the degradation of misfolded proteins. This is ATP-dependent Clp protease proteolytic subunit from Acorus calamus (Sweet flag).